Here is a 145-residue protein sequence, read N- to C-terminus: UPF0763 protein CFF8240_1572 (145 aa).

This sequence belongs to the UPF0763 family.

This Campylobacter fetus subsp. fetus (strain 82-40) protein is UPF0763 protein CFF8240_1572.